We begin with the raw amino-acid sequence, 1628 residues long: THO complex subunit 2 (1628 aa).

2 stretches are compositionally biased toward basic and acidic residues: residues 1 to 10 (MTSLPEKDQQ) and 1360 to 1399 (TDNK…EGNR). Disordered regions lie at residues 1–21 (MTSL…NQKK) and 1337–1628 (VALN…RKIQ). Phosphothreonine occurs at positions 1406 and 1408. Residues 1411-1429 (DIQRSDSKLREDQSRDRTP) show a composition bias toward basic and acidic residues. Polar residues predominate over residues 1430–1444 (QSRSFTNENNDNLRS). The segment covering 1461–1474 (ARREHESQKSDRWR) has biased composition (basic and acidic residues). Residues 1476–1493 (NGNVNRNPRVSNNNSTNV) are compositionally biased toward low complexity. Residues 1494–1526 (SRERSSEANHRTSNDNKRDEVTEGKDKNKRQDI) are compositionally biased toward basic and acidic residues. Residues 1527 to 1550 (SGESNSRQNNAISRAGRSNGSNRG) are compositionally biased toward polar residues. The segment covering 1551-1560 (NDSRDADGRR) has biased composition (basic and acidic residues). Serine 1577 carries the phosphoserine modification. The span at 1581–1628 (LREEDERENSRRRARQDDRRDRDSRQQRDRPRDRTSRSAREEKRRKIQ) shows a compositional bias: basic and acidic residues.

Belongs to the THOC2 family. As to quaternary structure, component of the THO complex. THO associates with DNA and RNA in vitro.

The protein resides in the nucleus. Component the THO subcomplex of the TREX complex, which operates in coupling transcription elongation to mRNA export. The THO complex is recruited to transcribed genes and moves along the gene with the elongating polymerase during transcription. THO is important for stabilizing nascent RNA in the RNA polymerase II elongation complex by preventing formation of DNA:RNA hybrids behind the elongating polymerase. The protein is THO complex subunit 2 (tho2) of Schizosaccharomyces pombe (strain 972 / ATCC 24843) (Fission yeast).